A 27-amino-acid polypeptide reads, in one-letter code: FMKVIDPGTKWCGPGNKAADDTDNGKN.

The interval 1 to 27 (FMKVIDPGTKWCGPGNKAADDTDNGKN) is disordered. Ca(2+)-binding residues include W11, G13, and G15. Over residues 18–27 (AADDTDNGKN) the composition is skewed to basic and acidic residues.

It belongs to the phospholipase A2 family. It depends on Ca(2+) as a cofactor. Expressed by the venom gland.

It is found in the secreted. It catalyses the reaction a 1,2-diacyl-sn-glycero-3-phosphocholine + H2O = a 1-acyl-sn-glycero-3-phosphocholine + a fatty acid + H(+). Functionally, PLA2 catalyzes the calcium-dependent hydrolysis of the 2-acyl groups in 3-sn-phosphoglycerides. This chain is Phospholipase A2 2, found in Opisthacanthus cayaporum (South American scorpion).